The primary structure comprises 371 residues: Cytochrome b (371 aa).

A run of 4 helical transmembrane segments spans residues 25-45, 69-90, 105-125, and 170-190; these read FGSM…FLAV, WMMQ…YIHI, WMSG…GYVL, and FFAL…LHII. Residues H75 and H89 each coordinate heme b. Heme b-binding residues include H174 and H188. Residue H193 coordinates a ubiquinone. The next 4 membrane-spanning stretches (helical) occupy residues 218-238, 280-300, 312-332, and 339-358; these read YKDL…VSFF, LGGA…PFMH, LSQL…WAAT, and YIMI…LSIP.

The protein belongs to the cytochrome b family. The cytochrome bc1 complex contains 3 respiratory subunits (MT-CYB, CYC1 and UQCRFS1), 2 core proteins (UQCRC1 and UQCRC2) and probably 6 low-molecular weight proteins. It depends on heme b as a cofactor.

The protein localises to the mitochondrion inner membrane. Functionally, component of the ubiquinol-cytochrome c reductase complex (complex III or cytochrome b-c1 complex) that is part of the mitochondrial respiratory chain. The b-c1 complex mediates electron transfer from ubiquinol to cytochrome c. Contributes to the generation of a proton gradient across the mitochondrial membrane that is then used for ATP synthesis. The protein is Cytochrome b (MT-CYB) of Simalia amethistina (Amethystine python).